The chain runs to 507 residues: Protein phosphatase 1J (507 aa).

Disordered stretches follow at residues 1–102 (MLNR…RLPW) and 197–220 (LCLPSTPGTPGAPSPSQLVSPQSC). Residues 14-23 (SSGGTSSQRS) show a composition bias toward low complexity. Residue Thr-41 is modified to Phosphothreonine. A compositionally biased stretch (polar residues) spans 59-73 (TAETTVSFSRPTFLQ). Ser-65 and Ser-75 each carry phosphoserine. Residues 103 to 499 (STGYAEVINA…DDISVFVIPL (397 aa)) enclose the PPM-type phosphatase domain. Low complexity predominate over residues 199-212 (LPSTPGTPGAPSPS).

The protein belongs to the PP2C family. Interacts with UBE2I/UBC9. Specifically expressed in the testicular germ cells.

The catalysed reaction is O-phospho-L-seryl-[protein] + H2O = L-seryl-[protein] + phosphate. It catalyses the reaction O-phospho-L-threonyl-[protein] + H2O = L-threonyl-[protein] + phosphate. The sequence is that of Protein phosphatase 1J (Ppm1j) from Mus musculus (Mouse).